The sequence spans 695 residues: DNA ligase (695 aa).

NAD(+)-binding positions include 44–48, 93–94, and Glu-124; these read DAEYD and SL. The active-site N6-AMP-lysine intermediate is the Lys-126. NAD(+)-binding residues include Arg-147, Glu-187, Lys-304, and Lys-328. Zn(2+) is bound by residues Cys-422, Cys-425, Cys-440, and Cys-445. The BRCT domain maps to 606–695; sequence TVQGPLAGKT…GIEVEAAARS (90 aa).

Belongs to the NAD-dependent DNA ligase family. LigA subfamily. Requires Mg(2+) as cofactor. It depends on Mn(2+) as a cofactor.

The enzyme catalyses NAD(+) + (deoxyribonucleotide)n-3'-hydroxyl + 5'-phospho-(deoxyribonucleotide)m = (deoxyribonucleotide)n+m + AMP + beta-nicotinamide D-nucleotide.. In terms of biological role, DNA ligase that catalyzes the formation of phosphodiester linkages between 5'-phosphoryl and 3'-hydroxyl groups in double-stranded DNA using NAD as a coenzyme and as the energy source for the reaction. It is essential for DNA replication and repair of damaged DNA. This is DNA ligase from Thermomicrobium roseum (strain ATCC 27502 / DSM 5159 / P-2).